The sequence spans 796 residues: Vacuolar protein sorting-associated protein 35 (796 aa).

A Phosphoserine modification is found at Ser-7. Interaction with SNX3 regions lie at residues 25-44 and 205-215; these read VQSF…DALK and DREKRERERQE. The interval 438–796 is interaction with SLC11A2; it reads CYVLSNVLDY…EGPIYEGLIL (359 aa). An interaction with IGF2R cytoplasmic domain region spans residues 500-693; sequence SDDPDQQYLI…DKNGEELHGG (194 aa). The disordered stretch occupies residues 776–796; it reads HLRSRRESPESEGPIYEGLIL. Position 783 is a phosphoserine (Ser-783). Position 791 is a phosphotyrosine (Tyr-791).

This sequence belongs to the VPS35 family. As to quaternary structure, component of the heterotrimeric retromer cargo-selective complex (CSC), also described as vacuolar protein sorting subcomplex (VPS) formed by VPS26 (VPS26A or VPS26B), VPS29 and VPS35. The CSC has a highly elongated structure with VPS26 and VPS29 binding independently at opposite distal ends of VPS35 as central platform. The CSC is believed to associate with variable sorting nexins to form functionally distinct retromer complex variants. The originally described retromer complex (also called SNX-BAR retromer) is a pentamer containing the CSC and a heterodimeric membrane-deforming subcomplex formed between SNX1 or SNX2 and SNX5 or SNX6 (also called SNX-BAR subcomplex); the affinity between the respective CSC and SNX-BAR subcomplexes is low. The CSC associates with SNX3 to form a SNX3-retromer complex. The CSC associates with SNX27, the WASH complex and the SNX-BAR subcomplex to form the SNX27-retromer complex. Interacts with VPS26A, VPS29, VPS26B and LRRK2. Interacts with SNX1, SNX2, IGF2R, SNX3, GOLPH3, SLC11A2, WASHC2, FKBP15, WASHC1, EHD1. Interacts with MAGEL2; leading to recruitment of the TRIM27:MAGEL2 E3 ubiquitin ligase complex retromer-containing endosomes. Interacts with SORCS2. Detected in striatum (at protein level). Ubiquitous. Highly expressed in fat tissue, testis, brain, kidney, thymus, liver and pancreas, and at lower levels in heart, intestine and skeletal muscle. Detected in oocytes, pre-implantation embryos and at 6.5-12.5 dpc.

The protein localises to the cytoplasm. It localises to the membrane. Its subcellular location is the endosome. It is found in the early endosome. The protein resides in the late endosome. In terms of biological role, acts as a component of the retromer cargo-selective complex (CSC). The CSC is believed to be the core functional component of retromer or respective retromer complex variants acting to prevent missorting of selected transmembrane cargo proteins into the lysosomal degradation pathway. The recruitment of the CSC to the endosomal membrane involves RAB7A and SNX3. The CSC seems to associate with the cytoplasmic domain of cargo proteins predominantly via VPS35; however, these interactions seem to be of low affinity and retromer SNX proteins may also contribute to cargo selectivity thus questioning the classical function of the CSC. The SNX-BAR retromer mediates retrograde transport of cargo proteins from endosomes to the trans-Golgi network (TGN) and is involved in endosome-to-plasma membrane transport for cargo protein recycling. The SNX3-retromer mediates the retrograde transport of WLS distinct from the SNX-BAR retromer pathway. The SNX27-retromer is believed to be involved in endosome-to-plasma membrane trafficking and recycling of a broad spectrum of cargo proteins. The CSC seems to act as recruitment hub for other proteins, such as the WASH complex and TBC1D5. Required for retrograde transport of lysosomal enzyme receptor IGF2R and SLC11A2. Required to regulate transcytosis of the polymeric immunoglobulin receptor (pIgR-pIgA). Required for endosomal localization of WASHC2 and mediates the association of the CSC with the WASH complex. The polypeptide is Vacuolar protein sorting-associated protein 35 (Vps35) (Mus musculus (Mouse)).